Reading from the N-terminus, the 708-residue chain is Capsid scaffolding protein (708 aa).

Residues His63, Ser132, and His157 each act as charge relay system in the active site. 3 disordered regions span residues 269 to 339, 455 to 565, and 593 to 619; these read ASAE…MSHP, HPSY…QQQR, and ALPSAASSSPTTTTVCTPTGELTSGGG. Residues 284–293 are compositionally biased toward low complexity; that stretch reads PAAGARVPSS. Pro residues predominate over residues 294–311; the sequence is SPSPPVEPPSPVQPPALP. Residues 326-339 are compositionally biased toward low complexity; the sequence is SPSEPAEAASMSHP. Positions 333-352 are interaction with pAP; that stretch reads AASMSHPLSAAVPAATAPPG. Positions 498–513 are enriched in basic residues; sequence KQHRHGGSGGHNKRRK. Short sequence motifs (nuclear localization signal) lie at residues 510–515 and 537–543; these read KRRKET and RARKRLK. Residues 593-611 are compositionally biased toward low complexity; sequence ALPSAASSSPTTTTVCTPT. The interval 688–708 is interaction with major capsid protein; that stretch reads PPKDMVDLNRRIFVAALNKLE.

The protein belongs to the herpesviridae capsid scaffolding protein family. In terms of assembly, homomultimer. Interacts with major capsid protein. As to quaternary structure, exists in a monomer-dimer equilibrium with the dimer being the active species. Post-translationally, capsid scaffolding protein is cleaved by assemblin after formation of the spherical procapsid. As a result, the capsid obtains its mature, icosahedral shape. Cleavages occur at two or more sites: release (R-site) and maturation (M-site).

Its subcellular location is the host cytoplasm. It is found in the host nucleus. It catalyses the reaction Cleaves -Ala-|-Ser- and -Ala-|-Ala- bonds in the scaffold protein.. In terms of biological role, acts as a scaffold protein by binding major capsid protein in the cytoplasm, inducing the nuclear localization of both proteins. Multimerizes in the nucleus such as major capsid protein forms the icosahedral T=16 capsid. Autocatalytic cleavage releases the assembly protein, and subsequently abolishes interaction with major capsid protein. Cleavages products are evicted from the capsid before or during DNA packaging. Protease that plays an essential role in virion assembly within the nucleus. Catalyzes the cleavage of the assembly protein after formation of the spherical procapsid. By that cleavage, the capsid matures and gains its icosahedral shape. The cleavage sites seem to include -Ala-Ser-, -Ala-Ala-, as well as Ala-Thr bonds. Assemblin and cleavages products are evicted from the capsid before or during DNA packaging. Its function is as follows. Plays a major role in capsid assembly. Acts as a scaffold protein by binding major capsid protein. Multimerizes in the nucleus such as major capsid protein forms the icosahedral T=16 capsid. Cleaved by assemblin after capsid completion. The cleavages products are evicted from the capsid before or during DNA packaging. The chain is Capsid scaffolding protein (UL80) from Homo sapiens (Human).